A 1758-amino-acid polypeptide reads, in one-letter code: Y' element ATP-dependent helicase YIL177C (1758 aa).

The 178-residue stretch at 668-845 (EIYMADTPSV…LQRIGLTGLA (178 aa)) folds into the Helicase ATP-binding domain. 681-688 (APPGYGKT) is a binding site for ATP. Residues 900-1051 (ALKLLLALFE…EFYGLESKKG (152 aa)) enclose the Helicase C-terminal domain. Positions 1142–1360 (NVRTNATTNA…ATTTESTNAS (219 aa)) are enriched in low complexity. The tract at residues 1142–1384 (NVRTNATTNA…RFHPVTDINK (243 aa)) is disordered. Positions 1361–1384 (AKEDANKDGNAEDNRFHPVTDINK) are enriched in basic and acidic residues.

The protein belongs to the helicase family. Yeast subtelomeric Y' repeat subfamily.

Catalyzes DNA unwinding and is involved in telomerase-independent telomere maintenance. This is Y' element ATP-dependent helicase YIL177C from Saccharomyces cerevisiae (strain ATCC 204508 / S288c) (Baker's yeast).